A 560-amino-acid polypeptide reads, in one-letter code: Nibrin homolog (560 aa).

In terms of domain architecture, FHA spans 25-87; sequence YKVGRKDCDV…YGTFFNKVQG (63 aa). The 76-residue stretch at 115–190 folds into the BRCT domain; it reads TFRLSFVPIV…KQIVLGDWFK (76 aa). The Nuclear localization signal motif lies at 511-518; sequence YKRGTVID.

This sequence belongs to the Nibrin family. As to quaternary structure, component of the MRN complex composed of two heterodimers RAD50 and MRE11 associated with a single NBS1.

The protein localises to the nucleus. It localises to the chromosome. In terms of biological role, component of the MRN complex, which plays a central role in double-strand break (DSB) repair, DNA recombination, maintenance of telomere integrity and meiosis. The MRN complex is involved in the repair of DNA double-strand breaks (DSBs) via homologous recombination (HR), an error-free mechanism which primarily occurs during S and G2 phases. The complex (1) mediates the end resection of damaged DNA, which generates proper single-stranded DNA, a key initial steps in HR, and is (2) required for the recruitment of other repair factors and efficient activation of ATM and ATR upon DNA damage. The MRN complex possesses single-strand endonuclease activity and double-strand-specific 3'-5' exonuclease activity, which are provided by MRE11, to initiate end resection, which is required for single-strand invasion and recombination. Within the MRN complex, NBS1 acts as a protein-protein adapter, which specifically recognizes and binds phosphorylated proteins, promoting their recruitment to DNA damage sites. Recruits MRE11 and RAD50 components of the MRN complex to DSBs in response to DNA damage. In Oryza sativa subsp. indica (Rice), this protein is Nibrin homolog.